An 860-amino-acid chain; its full sequence is DNA mismatch repair protein MutS (860 aa).

608–615 (GPNMAGKS) lines the ATP pocket.

The protein belongs to the DNA mismatch repair MutS family.

Its function is as follows. This protein is involved in the repair of mismatches in DNA. It is possible that it carries out the mismatch recognition step. This protein has a weak ATPase activity. The polypeptide is DNA mismatch repair protein MutS (Borrelia turicatae (strain 91E135)).